Consider the following 431-residue polypeptide: CCA tRNA nucleotidyltransferase 1, mitochondrial (431 aa).

A mitochondrion-targeting transit peptide spans 1 to 31; it reads MWAKLFLRPSFVNRVHLTWSCRALLTMQLKT. ATP is bound by residues G61 and R64. CTP-binding residues include G61 and R64. The Mg(2+) site is built by D74 and D76. ATP-binding residues include R148, D191, R194, R197, and R200. CTP-binding residues include R148, D191, R194, R197, and R200.

This sequence belongs to the tRNA nucleotidyltransferase/poly(A) polymerase family. As to quaternary structure, monomer, and homodimer. Requires Mg(2+) as cofactor. As to expression, expressed ubiquitously during early embryogenesis.

Its subcellular location is the mitochondrion. It is found in the cytoplasm. It localises to the nucleus. It catalyses the reaction a tRNA precursor + 2 CTP + ATP = a tRNA with a 3' CCA end + 3 diphosphate. It carries out the reaction a tRNA with a 3' CCA end + 2 CTP + ATP = a tRNA with a 3' CCACCA end + 3 diphosphate. Functionally, nucleotidyltransferase that catalyzes the addition and repair of the essential 3'-terminal CCA sequence in tRNAs, which is necessary for the attachment of amino acids to the 3' terminus of tRNA molecules, using CTP and ATP as substrates. tRNA 3'-terminal CCA addition is required both for tRNA processing and repair. Promotes tRNA repair and recycling downstream of the ribosome-associated quality control (RQC) pathway by mediating addition of the tRNA 3'-terminal CCA following cleavage by ankzf1 and repair by elac1. Also involved in tRNA surveillance by mediating tandem CCA addition to generate a CCACCA at the 3' terminus of unstable tRNAs and tRNA-like transcripts. While stable tRNAs receive only 3'-terminal CCA, unstable tRNAs beginning with GG are marked with CCACCA and rapidly degraded. The structural flexibility of RNA controls the choice between CCA versus CCACCA addition: following the first CCA addition cycle, nucleotide-binding to the active site triggers a clockwise screw motion, producing torque on the RNA. This ejects stable RNAs, whereas unstable RNAs are refolded while bound to the enzyme and subjected to a second CCA catalytic cycle. In Danio rerio (Zebrafish), this protein is CCA tRNA nucleotidyltransferase 1, mitochondrial.